The sequence spans 351 residues: Spindolin (351 aa).

A signal peptide spans 1–20 (MNKFYYICIYINILYVCVSG).

Homodimer; disulfide-linked.

This protein is a spindle body protein. This chain is Spindolin, found in Lepidoptera (butterflies and moths).